Here is a 312-residue protein sequence, read N- to C-terminus: MQGACISESQPWYLHFVCFIGFLFLLRVLFIPLLKWFTTRFLLTPKRLKRYGSWAMVTGATEGIGRAFAHELAKHGLNLILVSRNLSKLESVSDDFQQEFPHIKIKIIPFDFSSEGGYGAIEEGIKGLEVGILINNVGITYPRAMFFHEVDQLTWTKILRVNLEATTWVTRSLIGPMLHRRRGAIVNISSGAAVVVPSHPLYAIYAATKAYVDALSRSLHVEYKQFGIDVQCQVPLYVSTRMVSEVAAIDKPSLFVPSPEVYAKAAVAQIGIGSRCSPFWAHSLQWFLVGLVPDNLVDTWRLSIGLRRRSLS.

The helical transmembrane segment at 14–34 threads the bilayer; it reads LHFVCFIGFLFLLRVLFIPLL. 52–81 contributes to the NADP(+) binding site; that stretch reads GSWAMVTGATEGIGRAFAHELAKHGLNLIL. Residue Ser-190 participates in substrate binding. The active-site Proton acceptor is the Tyr-205.

It belongs to the short-chain dehydrogenases/reductases (SDR) family. As to expression, expressed in green siliques, flowers, inflorescence stems and leaves. Not detected in roots.

The protein localises to the endoplasmic reticulum membrane. Probable reductase, but unlike KCR1, has no beta-ketoacyl-coenzyme A reductase activity. The chain is Very-long-chain 3-oxoacyl-CoA reductase-like protein At1g24470 (KCR2) from Arabidopsis thaliana (Mouse-ear cress).